The following is a 197-amino-acid chain: Holliday junction branch migration complex subunit RuvA (197 aa).

Residues 1 to 64 (MIASVRGTLI…EDALTLYGFK (64 aa)) are domain I. The interval 65–145 (TVEQRQLFET…GLPVAPGVSP (81 aa)) is domain II. Residues 146–153 (AVAAVNAE) form a flexible linker region. Positions 153–197 (ELSEMLVSLGFSSAEASTAIAALPPDAPLDLEERLRLALRYFGAR) are domain III.

This sequence belongs to the RuvA family. Homotetramer. Forms an RuvA(8)-RuvB(12)-Holliday junction (HJ) complex. HJ DNA is sandwiched between 2 RuvA tetramers; dsDNA enters through RuvA and exits via RuvB. An RuvB hexamer assembles on each DNA strand where it exits the tetramer. Each RuvB hexamer is contacted by two RuvA subunits (via domain III) on 2 adjacent RuvB subunits; this complex drives branch migration. In the full resolvosome a probable DNA-RuvA(4)-RuvB(12)-RuvC(2) complex forms which resolves the HJ.

The protein resides in the cytoplasm. The RuvA-RuvB-RuvC complex processes Holliday junction (HJ) DNA during genetic recombination and DNA repair, while the RuvA-RuvB complex plays an important role in the rescue of blocked DNA replication forks via replication fork reversal (RFR). RuvA specifically binds to HJ cruciform DNA, conferring on it an open structure. The RuvB hexamer acts as an ATP-dependent pump, pulling dsDNA into and through the RuvAB complex. HJ branch migration allows RuvC to scan DNA until it finds its consensus sequence, where it cleaves and resolves the cruciform DNA. This chain is Holliday junction branch migration complex subunit RuvA, found in Roseiflexus castenholzii (strain DSM 13941 / HLO8).